We begin with the raw amino-acid sequence, 325 residues long: Foldase protein PrsA (325 aa).

The signal sequence occupies residues 1 to 20 (MKLMNKIIVPVTASALLLGA). The N-palmitoyl cysteine moiety is linked to residue Cys-21. Cys-21 carries the S-diacylglycerol cysteine lipid modification. The PpiC domain maps to 139 to 245 (ENSKKTSHIL…YGYHIIKADK (107 aa)). Disordered stretches follow at residues 159-200 (EGLS…SAKK) and 303-325 (PDKI…NSGS).

The protein belongs to the PrsA family.

The protein localises to the cell membrane. The enzyme catalyses [protein]-peptidylproline (omega=180) = [protein]-peptidylproline (omega=0). Its function is as follows. Plays a major role in protein secretion by helping the post-translocational extracellular folding of several secreted proteins. This Staphylococcus epidermidis (strain ATCC 35984 / DSM 28319 / BCRC 17069 / CCUG 31568 / BM 3577 / RP62A) protein is Foldase protein PrsA.